The sequence spans 475 residues: L-seryl-tRNA(Sec) selenium transferase (475 aa).

N6-(pyridoxal phosphate)lysine is present on Lys-295.

The protein belongs to the SelA family. Pyridoxal 5'-phosphate serves as cofactor.

Its subcellular location is the cytoplasm. It carries out the reaction L-seryl-tRNA(Sec) + selenophosphate + H(+) = L-selenocysteinyl-tRNA(Sec) + phosphate. It participates in aminoacyl-tRNA biosynthesis; selenocysteinyl-tRNA(Sec) biosynthesis; selenocysteinyl-tRNA(Sec) from L-seryl-tRNA(Sec) (bacterial route): step 1/1. In terms of biological role, converts seryl-tRNA(Sec) to selenocysteinyl-tRNA(Sec) required for selenoprotein biosynthesis. The sequence is that of L-seryl-tRNA(Sec) selenium transferase from Desulfovibrio desulfuricans (strain ATCC 27774 / DSM 6949 / MB).